The sequence spans 219 residues: Carbonic anhydrase 1 (219 aa).

Residues cysteine 39, aspartate 41, histidine 98, and cysteine 101 each contribute to the Zn(2+) site.

This sequence belongs to the beta-class carbonic anhydrase family. Oligomer. It depends on Zn(2+) as a cofactor.

It catalyses the reaction hydrogencarbonate + H(+) = CO2 + H2O. Functionally, reversible hydration of carbon dioxide. Carbon dioxide formed in the bicarbonate-dependent decomposition of cyanate by cyanase (CynS) diffuses out of the cell faster than it would be hydrated to bicarbonate, so the apparent function of this enzyme is to catalyze the hydration of carbon dioxide and thus prevent depletion of cellular bicarbonate. This is Carbonic anhydrase 1 (cynT) from Escherichia coli O157:H7.